A 355-amino-acid polypeptide reads, in one-letter code: Ribosomal RNA large subunit methyltransferase M (355 aa).

Residues S191, 224–227, D243, D263, and D279 each bind S-adenosyl-L-methionine; that span reads APGG. K308 acts as the Proton acceptor in catalysis.

It belongs to the class I-like SAM-binding methyltransferase superfamily. RNA methyltransferase RlmE family. RlmM subfamily. In terms of assembly, monomer.

The protein localises to the cytoplasm. It catalyses the reaction cytidine(2498) in 23S rRNA + S-adenosyl-L-methionine = 2'-O-methylcytidine(2498) in 23S rRNA + S-adenosyl-L-homocysteine + H(+). In terms of biological role, catalyzes the 2'-O-methylation at nucleotide C2498 in 23S rRNA. The sequence is that of Ribosomal RNA large subunit methyltransferase M from Stenotrophomonas maltophilia (strain K279a).